Consider the following 629-residue polypeptide: MGYNAGSYDVIVIGAGHAGCEAGLAAARMGSKTLMLTINLDMVAFMPCNPSVGGPAKGIVVREIDALGGEMGRNIDKTHIQMRMLNTGKGPAVRALRAQADKFSYQHELKKTIEETPNLTLFQGMVERLIVEDGECKGVITQAGAEYTAKTVVITTGTFLRGEIIMGDLKYSSGPNNQQPSITLSEHLEELGFDLVRFKTGTPPRVNSNTIDYSKTEIQPGDDKPRAFSFETTKFIMDQIPCWLTYTSTETHRLIDENLHRSAMYSGMIKGTGPRYCPSIEDKVVRFNDKPRHQIFLEPEGRNTQEVYVQGLSTSLPEDVQRDMLRTIPGLENVEMMRTGYAIEYDAIVPTQLWPTLETKKIKNLYTAGQINGTSGYEEAAGQGLMAGINAACRSLGKKEVILGREDAYIGVLIDDLVTKGTNEPYRLLTSRAEYRLLLRHDNADLRLTEVGHEIGLITEERYERFTNKKLQIEQEKERLSSIIIKPRPEVQELIRNIGGSELKDGIRASDLLRRPEMTYEHIHLLVPSEVELSDEVKEQVEIQIKYEGYIEKSLQQVERMKKMENKKIPVDIDYDAISSLASEARQKLKDVRPLSMGQASRISGVNPADISILLVYIEQGKIARVSNQ.

Residues 14–19 (GAGHAG), Val-126, and Ser-181 contribute to the FAD site. 273-287 (GPRYCPSIEDKVVRF) contributes to the NAD(+) binding site. Residue Gln-370 coordinates FAD.

The protein belongs to the MnmG family. As to quaternary structure, homodimer. Heterotetramer of two MnmE and two MnmG subunits. FAD serves as cofactor.

It is found in the cytoplasm. Its function is as follows. NAD-binding protein involved in the addition of a carboxymethylaminomethyl (cmnm) group at the wobble position (U34) of certain tRNAs, forming tRNA-cmnm(5)s(2)U34. The chain is tRNA uridine 5-carboxymethylaminomethyl modification enzyme MnmG from Bacillus thuringiensis (strain Al Hakam).